Reading from the N-terminus, the 296-residue chain is Urease operon transcriptional activator (296 aa).

The HTH araC/xylS-type domain maps to 171 to 268 (QAITHLITQE…NMTPSQFRLQ (98 aa)). DNA-binding regions (H-T-H motif) lie at residues 188–209 (DDVAKALFTTPSTLRRHLNREG) and 235–258 (VFQISHRCGFGSNAYFCDVFKRKY).

Its function is as follows. Positive regulator of the expression of the urease operon. This is Urease operon transcriptional activator (ureR) from Escherichia coli.